The chain runs to 512 residues: 2,3-bisphosphoglycerate-independent phosphoglycerate mutase (512 aa).

The Mn(2+) site is built by D18 and S68. S68 (phosphoserine intermediate) is an active-site residue. Residues H129, 159 to 160, R191, R197, 265 to 268, and K338 contribute to the substrate site; these read RD and RPDR. Mn(2+)-binding residues include D403, H407, D444, H445, and H462.

Belongs to the BPG-independent phosphoglycerate mutase family. As to quaternary structure, monomer. The cofactor is Mn(2+).

The catalysed reaction is (2R)-2-phosphoglycerate = (2R)-3-phosphoglycerate. It functions in the pathway carbohydrate degradation; glycolysis; pyruvate from D-glyceraldehyde 3-phosphate: step 3/5. Functionally, catalyzes the interconversion of 2-phosphoglycerate and 3-phosphoglycerate. The polypeptide is 2,3-bisphosphoglycerate-independent phosphoglycerate mutase (Mesomycoplasma hyopneumoniae (strain 232) (Mycoplasma hyopneumoniae)).